The sequence spans 120 residues: Cell division topological specificity factor (120 aa).

Positions 93–120 (LNSCEGENPQQDPGAAPSEGGHLSSPSP) are disordered.

The protein belongs to the MinE family.

Functionally, prevents the cell division inhibition by proteins MinC and MinD at internal division sites while permitting inhibition at polar sites. This ensures cell division at the proper site by restricting the formation of a division septum at the midpoint of the long axis of the cell. The chain is Cell division topological specificity factor from Synechococcus sp. (strain JA-3-3Ab) (Cyanobacteria bacterium Yellowstone A-Prime).